Consider the following 84-residue polypeptide: uncharacterized protein (84 aa).

This is an uncharacterized protein from Schizosaccharomyces pombe (strain 972 / ATCC 24843) (Fission yeast).